The following is an 85-amino-acid chain: Defensin-like protein 112 (85 aa).

A signal peptide spans 1 to 24 (MAISKKMLTTFVLTILLAVSFVHC). 4 disulfide bridges follow: C40–C80, C46–C71, C56–C78, and C60–C79.

Belongs to the DEFL family.

It is found in the secreted. This Arabidopsis thaliana (Mouse-ear cress) protein is Defensin-like protein 112.